Reading from the N-terminus, the 614-residue chain is Bifunctional 3'-phosphoadenosine 5'-phosphosulfate synthase 2 (614 aa).

The adenylyl-sulfate kinase stretch occupies residues 1 to 215; sequence MSGIKKQKTE…VVELLQEQNI (215 aa). 52–57 is a binding site for ATP; sequence GAGKTT. Adenosine 5'-phosphosulfate contacts are provided by residues 79 to 82, phenylalanine 91, 96 to 99, 122 to 123, lysine 161, and 174 to 175; these read DNVR, REEN, IS, and GF. Residues serine 197, 409–412, 511–515, and alanine 553 each bind ATP; these read QLRN and GRDPA. The tract at residues 224–614 is sulfate adenylyltransferase; that stretch reads IHELFVPENK…TDYYRSLEKN (391 aa).

In the N-terminal section; belongs to the APS kinase family. This sequence in the C-terminal section; belongs to the sulfate adenylyltransferase family. As to expression, expressed in cartilage and adrenal gland.

The enzyme catalyses sulfate + ATP + H(+) = adenosine 5'-phosphosulfate + diphosphate. The catalysed reaction is adenosine 5'-phosphosulfate + ATP = 3'-phosphoadenylyl sulfate + ADP + H(+). It functions in the pathway sulfur metabolism; sulfate assimilation. In terms of biological role, bifunctional enzyme with both ATP sulfurylase and APS kinase activity, which mediates two steps in the sulfate activation pathway. The first step is the transfer of a sulfate group to ATP to yield adenosine 5'-phosphosulfate (APS), and the second step is the transfer of a phosphate group from ATP to APS yielding 3'-phosphoadenylylsulfate/PAPS, the activated sulfate donor used by sulfotransferases. In mammals, PAPS is the sole source of sulfate while APS appears to only be an intermediate in the sulfate-activation pathway. Plays indirectly an important role in skeletogenesis during postnatal growth. This chain is Bifunctional 3'-phosphoadenosine 5'-phosphosulfate synthase 2 (PAPSS2), found in Homo sapiens (Human).